Here is a 57-residue protein sequence, read N- to C-terminus: Protein translocase subunit SecE (57 aa).

A helical transmembrane segment spans residues 34–54; that stretch reads AGILLIGAIGFLVFLIMGGIV.

This sequence belongs to the SecE/SEC61-gamma family. In terms of assembly, component of the Sec protein translocase complex. Heterotrimer consisting of SecY (alpha), SecG (beta) and SecE (gamma) subunits. The heterotrimers can form oligomers, although 1 heterotrimer is thought to be able to translocate proteins. Interacts with the ribosome. May interact with SecDF, and other proteins may be involved.

Its subcellular location is the cell membrane. Essential subunit of the Sec protein translocation channel SecYEG. Clamps together the 2 halves of SecY. May contact the channel plug during translocation. In Halobacterium salinarum (strain ATCC 29341 / DSM 671 / R1), this protein is Protein translocase subunit SecE.